Reading from the N-terminus, the 164-residue chain is Interferon gamma (164 aa).

Residues 1 to 19 form the signal peptide; the sequence is MTCQTYNLFVLSVIMIYYG. Residues asparagine 42 and asparagine 61 are each glycosylated (N-linked (GlcNAc...) asparagine).

This sequence belongs to the type II (or gamma) interferon family. Homodimer.

The protein localises to the secreted. In terms of biological role, produced by lymphocytes activated by specific antigens or mitogens. IFN-gamma, in addition to having antiviral activity, has important immunoregulatory functions. It is a potent activator of macrophages, it has antiproliferative effects on transformed cells and it can potentiate the antiviral and antitumor effects of the type I interferons. The protein is Interferon gamma (IFNG) of Numida meleagris (Helmeted guineafowl).